The sequence spans 81 residues: Acyl carrier protein (81 aa).

Positions 2–80 constitute a Carrier domain; it reads SKVDNIEQKV…DVVNYIKEHK (79 aa). Ser40 is subject to O-(pantetheine 4'-phosphoryl)serine.

This sequence belongs to the acyl carrier protein (ACP) family. In terms of processing, 4'-phosphopantetheine is transferred from CoA to a specific serine of apo-ACP by AcpS. This modification is essential for activity because fatty acids are bound in thioester linkage to the sulfhydryl of the prosthetic group.

Its subcellular location is the cytoplasm. It participates in lipid metabolism; fatty acid biosynthesis. In terms of biological role, carrier of the growing fatty acid chain in fatty acid biosynthesis. The protein is Acyl carrier protein of Rickettsia bellii (strain OSU 85-389).